The chain runs to 490 residues: Lysine--tRNA ligase (490 aa).

2 residues coordinate Mg(2+): glutamate 398 and glutamate 405.

It belongs to the class-II aminoacyl-tRNA synthetase family. In terms of assembly, homodimer. Mg(2+) is required as a cofactor.

It is found in the cytoplasm. The catalysed reaction is tRNA(Lys) + L-lysine + ATP = L-lysyl-tRNA(Lys) + AMP + diphosphate. In Metamycoplasma arthritidis (strain 158L3-1) (Mycoplasma arthritidis), this protein is Lysine--tRNA ligase.